We begin with the raw amino-acid sequence, 245 residues long: tRNA pseudouridine synthase A 2 (245 aa).

Asp53 acts as the Nucleophile in catalysis. Tyr111 contributes to the substrate binding site.

It belongs to the tRNA pseudouridine synthase TruA family. In terms of assembly, homodimer.

The catalysed reaction is uridine(38/39/40) in tRNA = pseudouridine(38/39/40) in tRNA. Functionally, formation of pseudouridine at positions 38, 39 and 40 in the anticodon stem and loop of transfer RNAs. In Bacillus thuringiensis subsp. konkukian (strain 97-27), this protein is tRNA pseudouridine synthase A 2.